Here is an 803-residue protein sequence, read N- to C-terminus: Ubiquitin carboxyl-terminal hydrolase 45 (803 aa).

The segment at 1–34 (MRLKDPFSLKTADMTKRSNKPKKPRDEDSSDEVG) is disordered. A UBP-type zinc finger spans residues 36–153 (LTCQHVSRAV…QTLDFLQKQS (118 aa)). Zn(2+)-binding residues include C38, H40, C62, C65, C85, C88, C93, H100, H104, H113, C126, and C129. The region spanning 192-802 (KGINNLGNTC…QAYLLFYEEL (611 aa)) is the USP domain. C201 acts as the Nucleophile in catalysis. The disordered stretch occupies residues 394–554 (PTNPARLGKS…LPSIRPQQGG (161 aa)). Residues 403 to 417 (SGREQDSLTSHDDSL) are compositionally biased toward basic and acidic residues. Composition is skewed to polar residues over residues 419-440 (AHSQ…SRHS) and 469-480 (SYRTDTMGSQSD). Low complexity predominate over residues 502-531 (SEWSPRIPSVSSHSSTSDKTSITTTLSTTT). Over residues 532–545 (HNPSLKSNPSSTPL) the composition is skewed to polar residues. The active-site Proton acceptor is H739.

Belongs to the peptidase C19 family. As to expression, retina.

It localises to the photoreceptor inner segment. It is found in the cytoplasm. Its subcellular location is the nucleus. The enzyme catalyses Thiol-dependent hydrolysis of ester, thioester, amide, peptide and isopeptide bonds formed by the C-terminal Gly of ubiquitin (a 76-residue protein attached to proteins as an intracellular targeting signal).. Its function is as follows. Catalyzes the deubiquitination of SPDL1. Plays a role in the repair of UV-induced DNA damage via deubiquitination of ERCC1, promoting its recruitment to DNA damage sites. May be involved in the maintenance of photoreceptor function. May play a role in normal retinal development. This Danio rerio (Zebrafish) protein is Ubiquitin carboxyl-terminal hydrolase 45.